Reading from the N-terminus, the 269-residue chain is Tryptophan synthase alpha chain (269 aa).

Catalysis depends on proton acceptor residues glutamate 49 and aspartate 60.

It belongs to the TrpA family. Tetramer of two alpha and two beta chains.

It carries out the reaction (1S,2R)-1-C-(indol-3-yl)glycerol 3-phosphate + L-serine = D-glyceraldehyde 3-phosphate + L-tryptophan + H2O. The protein operates within amino-acid biosynthesis; L-tryptophan biosynthesis; L-tryptophan from chorismate: step 5/5. In terms of biological role, the alpha subunit is responsible for the aldol cleavage of indoleglycerol phosphate to indole and glyceraldehyde 3-phosphate. The sequence is that of Tryptophan synthase alpha chain from Klebsiella aerogenes (Enterobacter aerogenes).